The primary structure comprises 457 residues: C4-dicarboxylate transport protein (457 aa).

The next 9 helical transmembrane spans lie at Phe-22 to Ala-42, Leu-55 to Met-75, Val-90 to Val-110, Leu-138 to Gly-158, Gly-168 to Val-188, Leu-209 to Ile-229, Trp-242 to Val-262, Leu-335 to Ala-357, and Ala-376 to Val-396.

It belongs to the dicarboxylate/amino acid:cation symporter (DAACS) (TC 2.A.23) family.

It is found in the cell inner membrane. Its function is as follows. Responsible for the transport of dicarboxylates such as succinate, fumarate, and malate from the periplasm across the membrane. This is C4-dicarboxylate transport protein from Xanthomonas oryzae pv. oryzae (strain MAFF 311018).